The following is a 68-amino-acid chain: Large ribosomal subunit protein bL31 (68 aa).

Zn(2+)-binding residues include Cys-16, Cys-18, Cys-37, and Cys-40.

The protein belongs to the bacterial ribosomal protein bL31 family. Type A subfamily. In terms of assembly, part of the 50S ribosomal subunit. Zn(2+) is required as a cofactor.

Its function is as follows. Binds the 23S rRNA. In Acidithiobacillus ferrooxidans (strain ATCC 23270 / DSM 14882 / CIP 104768 / NCIMB 8455) (Ferrobacillus ferrooxidans (strain ATCC 23270)), this protein is Large ribosomal subunit protein bL31.